Reading from the N-terminus, the 185-residue chain is ATP synthase subunit delta (185 aa).

Belongs to the ATPase delta chain family. In terms of assembly, F-type ATPases have 2 components, F(1) - the catalytic core - and F(0) - the membrane proton channel. F(1) has five subunits: alpha(3), beta(3), gamma(1), delta(1), epsilon(1). CF(0) has four main subunits: a(1), b(1), b'(1) and c(10-14). The alpha and beta chains form an alternating ring which encloses part of the gamma chain. F(1) is attached to F(0) by a central stalk formed by the gamma and epsilon chains, while a peripheral stalk is formed by the delta, b and b' chains.

The protein localises to the cellular thylakoid membrane. Functionally, f(1)F(0) ATP synthase produces ATP from ADP in the presence of a proton or sodium gradient. F-type ATPases consist of two structural domains, F(1) containing the extramembraneous catalytic core and F(0) containing the membrane proton channel, linked together by a central stalk and a peripheral stalk. During catalysis, ATP synthesis in the catalytic domain of F(1) is coupled via a rotary mechanism of the central stalk subunits to proton translocation. In terms of biological role, this protein is part of the stalk that links CF(0) to CF(1). It either transmits conformational changes from CF(0) to CF(1) or is implicated in proton conduction. The polypeptide is ATP synthase subunit delta (Cyanothece sp. (strain PCC 7425 / ATCC 29141)).